Here is a 1909-residue protein sequence, read N- to C-terminus: Endoribonuclease Dicer homolog 1 (1909 aa).

Residues 99–177 (TVKENGLQKN…NNKKKRECNN (79 aa)) are disordered. A compositionally biased stretch (basic and acidic residues) spans 110-124 (GKRDEFSKEEGDKDR). Residues 131–146 (SYQSERSNLSGRGHVN) show a composition bias toward polar residues. Residues 147 to 177 (NSREGDRFMNRKRTRNWDEAGNNKKKRECNN) show a composition bias toward basic and acidic residues. Positions 256 to 433 (VLEQAKAKNT…QVDCAIKIRN (178 aa)) constitute a Helicase ATP-binding domain. Residue 269–276 (LETGAGKT) coordinates ATP. The DECH box signature appears at 378 to 381 (DECH). The 162-residue stretch at 651–812 (SLIKLLLKYQ…RTDLSHLKDT (162 aa)) folds into the Helicase C-terminal domain. The 96-residue stretch at 840-935 (AVGLVHFYCS…LPDKGSGQDA (96 aa)) folds into the Dicer dsRNA-binding fold domain. Residues 929-952 (KGSGQDAEKADQDDEGEPVPGTAR) are disordered. The PAZ domain maps to 1189–1318 (EVEEDLSKGK…LPPELCVVHP (130 aa)). RNase III domains follow at residues 1342-1518 (LAVQ…VEGG) and 1559-1707 (FVGL…LDSG). Residues Glu-1597, Asp-1693, and Glu-1696 each contribute to the Mg(2+) site. 2 consecutive DRBM domains span residues 1733 to 1796 (HPVR…ALKE) and 1831 to 1906 (FTRQ…LLNK). The disordered stretch occupies residues 1801 to 1831 (ESKEKHINNGNAGEDQGENENGNKKNGHQPF).

It belongs to the helicase family. Dicer subfamily. As to quaternary structure, interacts (via N-terminus) with DDL. Interacts (via DRBM domains) with DRB1, DRB2 and DRB5. May interact with AGO1 or AGO10 through their common PAZ domains. The cofactor is Mg(2+). It depends on Mn(2+) as a cofactor. Highly expressed in flowers and seeds and detected in leaves and stems. Found in ovule integuments, inflorescence and floral meristems, stigma of flowers until just before pollination, vasculature of the funiculus, and embryo.

The protein resides in the nucleus. Functionally, ribonuclease (RNase) III involved in RNA-mediated post-transcriptional gene silencing (PTGS). Functions in the microRNAs (miRNAs) biogenesis pathway by cleaving primary miRNAs (pri-miRNAs) and precursor miRNAs (pre-miRNAs). Functions with DRB1/HYL1 and SERRATE proteins for accurate pri-miRNAs to miRNAs processing. Indirectly involved in the production of trans-acting small interfering RNAs (ta-siRNAs) derived from the TAS1, TAS2 or TAS3 endogenous transcripts by participating in the production of their initiating miRNAs. Involved in the processing of natural siRNAs (nat-siRNAs, derived from cis-natural antisense transcripts) by cleaving 24 nucleotide nat-siRNAs into 21 nucleotide nat-siRNAs. Can produce RDR6-dependent endogenous ta-siRNAs derived from TAS1 and TAS2. Required for the production of 30-40 nucleotide bacterial-induced long siRNAs (lsiRNA). Acts redundantly with DICER-LIKE 3 (DCL3) to promote flowering via repression of FLOWERING LOCUS C (FLC). Represses antiviral RNA silencing through negative regulation of the expression of DCL4 and DCL3. The polypeptide is Endoribonuclease Dicer homolog 1 (DCL1) (Arabidopsis thaliana (Mouse-ear cress)).